An 809-amino-acid chain; its full sequence is ATP-dependent RNA helicase HrpB (809 aa).

One can recognise a Helicase ATP-binding domain in the interval 14 to 177; sequence LTALDCAPQV…LPEAPVVISE (164 aa). 27–34 serves as a coordination point for ATP; sequence APTGAGKS. The short motif at 123 to 126 is the DEFH box element; sequence DEFH. One can recognise a Helicase C-terminal domain in the interval 195–368; that stretch reads RFDDAVAVAT…GLLMELLQWG (174 aa). The segment at 788–809 is disordered; sequence PKHVWPDDPANTAPTRRTKKYS.

Belongs to the DEAD box helicase family.

It catalyses the reaction ATP + H2O = ADP + phosphate + H(+). In Escherichia coli (strain K12), this protein is ATP-dependent RNA helicase HrpB (hrpB).